The chain runs to 597 residues: Probable translation initiation factor IF-2 (597 aa).

Residues 4 to 221 (IRQPIIAVLG…LIAGLSQKYL (218 aa)) enclose the tr-type G domain. Residues 13-20 (GHVDHGKT) are G1. 13 to 20 (GHVDHGKT) contacts GTP. The interval 38-42 (GITQH) is G2. The G3 stretch occupies residues 77–80 (DTPG). GTP is bound by residues 77 to 81 (DTPGH) and 131 to 134 (NKID). Residues 131–134 (NKID) form a G4 region. Residues 199 to 201 (SAK) are G5.

This sequence belongs to the TRAFAC class translation factor GTPase superfamily. Classic translation factor GTPase family. IF-2 subfamily.

In terms of biological role, function in general translation initiation by promoting the binding of the formylmethionine-tRNA to ribosomes. Seems to function along with eIF-2. The sequence is that of Probable translation initiation factor IF-2 from Thermococcus onnurineus (strain NA1).